The primary structure comprises 522 residues: 2-isopropylmalate synthase (522 aa).

One can recognise a Pyruvate carboxyltransferase domain in the interval 5 to 267 (VIIFDTTLRD…ETGINAKEIH (263 aa)). Aspartate 14, histidine 202, histidine 204, and asparagine 238 together coordinate Mn(2+). The tract at residues 392-522 (QLQQLVVQSD…MHKNRELGGV (131 aa)) is regulatory domain.

The protein belongs to the alpha-IPM synthase/homocitrate synthase family. LeuA type 1 subfamily. In terms of assembly, homodimer. It depends on Mn(2+) as a cofactor.

Its subcellular location is the cytoplasm. It catalyses the reaction 3-methyl-2-oxobutanoate + acetyl-CoA + H2O = (2S)-2-isopropylmalate + CoA + H(+). Its pathway is amino-acid biosynthesis; L-leucine biosynthesis; L-leucine from 3-methyl-2-oxobutanoate: step 1/4. Catalyzes the condensation of the acetyl group of acetyl-CoA with 3-methyl-2-oxobutanoate (2-ketoisovalerate) to form 3-carboxy-3-hydroxy-4-methylpentanoate (2-isopropylmalate). The sequence is that of 2-isopropylmalate synthase from Shewanella sp. (strain MR-4).